The sequence spans 520 residues: CBL-interacting serine/threonine-protein kinase 18 (520 aa).

2 disordered regions span residues 1–29 (MAQA…PHPK) and 48–67 (TDKD…SPRN). Residues 17–29 (PDPPPPPPPPHPK) show a composition bias toward pro residues. The segment covering 55–66 (SPQSPRSPRSPR) has biased composition (low complexity). The Protein kinase domain occupies 74–328 (YELGKLLGHG…IPEIMKNRWF (255 aa)). ATP contacts are provided by residues 80-88 (LGHGTFAKV) and lysine 103. The active-site Proton acceptor is aspartate 196. Residues 214 to 243 (DFGLSAVAEQLRQDGLCHTFCGTPAYIAPE) form an activation loop region. Serine 218 carries the phosphoserine modification. Residue threonine 232 is modified to Phosphothreonine. The interval 349 to 368 (EDEEEEASSSGRSSTVSESD) is disordered. Positions 356–366 (SSSGRSSTVSE) are enriched in low complexity. The NAF domain maps to 382–406 (PRPSSLNAFDIISFSSGFDLSGLFE). The PPI stretch occupies residues 410–439 (GEGTRFVSGAPVSKIISKLEEIAKIVSFTV).

Belongs to the protein kinase superfamily. CAMK Ser/Thr protein kinase family. SNF1 subfamily. As to quaternary structure, interacts with CBL1 and CBL9. It depends on Mn(2+) as a cofactor.

The enzyme catalyses L-seryl-[protein] + ATP = O-phospho-L-seryl-[protein] + ADP + H(+). It carries out the reaction L-threonyl-[protein] + ATP = O-phospho-L-threonyl-[protein] + ADP + H(+). In terms of biological role, CIPK serine-threonine protein kinases interact with CBL proteins. Binding of a CBL protein to the regulatory NAF domain of CIPK protein lead to the activation of the kinase in a calcium-dependent manner. In Arabidopsis thaliana (Mouse-ear cress), this protein is CBL-interacting serine/threonine-protein kinase 18 (CIPK18).